The primary structure comprises 652 residues: Complement component C1q receptor (652 aa).

Residues 1 to 21 (MATSMGLLLLLLLLLTQPGAG) form the signal peptide. Residues 24–580 (ADTEAVVCVG…QNNDGTDGQK (557 aa)) are Extracellular-facing. Residues 32-174 (VGTACYTAHS…CGSPGSPGSN (143 aa)) enclose the C-type lectin domain. Intrachain disulfides connect Cys-141/Cys-165, Cys-264/Cys-275, Cys-271/Cys-285, Cys-287/Cys-300, Cys-306/Cys-317, Cys-311/Cys-328, Cys-330/Cys-343, Cys-349/Cys-358, Cys-354/Cys-367, Cys-369/Cys-383, Cys-389/Cys-400, Cys-396/Cys-409, Cys-411/Cys-425, Cys-431/Cys-443, Cys-439/Cys-452, and Cys-454/Cys-467. EGF-like domains lie at 260 to 301 (PKYG…VTCA) and 302 to 344 (SRNP…LDCV). N-linked (GlcNAc...) asparagine glycosylation occurs at Asn-325. Residues 345 to 384 (DVDECQDSPCAQECVNTPGGFRCECWVGYEPGGPGEGACQ) enclose the EGF-like 3; calcium-binding domain. The EGF-like 4; calcium-binding domain maps to 385-426 (DVDECALGRSPCAQGCTNTDGSFHCSCEEGYVLAGEDGTQCQ). An EGF-like 5; calcium-binding domain is found at 427–468 (DVDECVGPGGPLCDSLCFNTQGSFHCGCLPGWVLAPNGVSCT). 2 disordered regions span residues 472–546 (VSLG…VWRE) and 553–572 (TAAS…ATQN). Residues 512 to 526 (ATPTTSRPSLSSDAP) show a composition bias toward polar residues. The helical transmembrane segment at 581 to 601 (LLLFYILGTVVAILLLLALAL) threads the bilayer. Residues 602–652 (GLLVYRKRRAKREEKKEKKPQNAADSYSWVPERAESRAMENQYSPTPGTDC) lie on the Cytoplasmic side of the membrane. Residues 611–652 (AKREEKKEKKPQNAADSYSWVPERAESRAMENQYSPTPGTDC) are disordered. Residues 612 to 621 (KREEKKEKKP) show a composition bias toward basic and acidic residues. Ser-627 is subject to Phosphoserine. A phosphotyrosine mark is found at Tyr-628 and Tyr-644. Over residues 640 to 652 (MENQYSPTPGTDC) the composition is skewed to polar residues.

Homodimer. Interacts with C1QBP; the association may represent a cell surface C1q receptor. Interacts with surfactant protein A/SFTPA1. Interacts with multimerin-2/MMRN2. Interacts with DAG1; this interaction plays an important role in endothelial cell migration. Interacts with CBL. Interacts with IGFBP7. Interacts with VEGFR2. As to quaternary structure, (Microbial infection) Interacts with hepatitis virus C/HCV core protein. N- and O-glycosylated. In terms of processing, phosphorylated on Tyr-628 and Tyr-644 by SRC; these phosphorylations promote endothelial cell adhesion and migration. In terms of tissue distribution, highly expressed in endothelial cells, platelets, cells of myeloid origin, such as monocytes and neutrophils. Not expressed in cells of lymphoid origin.

Its subcellular location is the cell membrane. Functionally, cell surface receptor that plays a role in various physiological processes including inflammation, phagocytosis, and cell adhesion. Plays a role in phagocytosis and enhances the uptake of apoptotic cells and immune complexes by acting as a receptor for defense collagens including surfactant protein A/SFTPA1, C1q, and mannose-binding lectin (MBL2). Plays a role in the regulation of endothelial cell function and adhesion by activating angiogenesis. Mechanistically, exerts its angiogenic function by associating with beta-dystroglycan, leading to SRC-dependent phosphorylation and subsequent recruitment of CBL. In turn, CBL provides a docking site for downstream signaling components, such as CRKL to enhance cell migration. Participates in angiogenesis also by acting as a receptor for the ECM pan-endothelial glycoprotein multimerin-2/MMRN2 and IGFBP7 ligands. Both ligands play a non-redundant role in CD93-mediated endothelial cell function. Acts as a key regulator of endothelial barrier function through modulating VEGFR2 function. The protein is Complement component C1q receptor (CD93) of Homo sapiens (Human).